Consider the following 246-residue polypeptide: Uridylate kinase (246 aa).

Position 19-22 (19-22 (KISG)) interacts with ATP. Gly61 contributes to the UMP binding site. The ATP site is built by Gly62 and Arg66. UMP-binding positions include Asp81 and 142-149 (TGNPFFTT). Positions 169, 170, 175, and 178 each coordinate ATP.

This sequence belongs to the UMP kinase family. In terms of assembly, homohexamer.

Its subcellular location is the cytoplasm. The enzyme catalyses UMP + ATP = UDP + ADP. Its pathway is pyrimidine metabolism; CTP biosynthesis via de novo pathway; UDP from UMP (UMPK route): step 1/1. Inhibited by UTP. Functionally, catalyzes the reversible phosphorylation of UMP to UDP. This is Uridylate kinase from Wolbachia sp. subsp. Brugia malayi (strain TRS).